Reading from the N-terminus, the 283-residue chain is Bifunctional protein FolD (283 aa).

Residues glycine 164–serine 166, serine 189, and isoleucine 230 contribute to the NADP(+) site.

It belongs to the tetrahydrofolate dehydrogenase/cyclohydrolase family. As to quaternary structure, homodimer.

The enzyme catalyses (6R)-5,10-methylene-5,6,7,8-tetrahydrofolate + NADP(+) = (6R)-5,10-methenyltetrahydrofolate + NADPH. The catalysed reaction is (6R)-5,10-methenyltetrahydrofolate + H2O = (6R)-10-formyltetrahydrofolate + H(+). Its pathway is one-carbon metabolism; tetrahydrofolate interconversion. Functionally, catalyzes the oxidation of 5,10-methylenetetrahydrofolate to 5,10-methenyltetrahydrofolate and then the hydrolysis of 5,10-methenyltetrahydrofolate to 10-formyltetrahydrofolate. This chain is Bifunctional protein FolD, found in Pelobacter propionicus (strain DSM 2379 / NBRC 103807 / OttBd1).